The sequence spans 369 residues: Anhydro-N-acetylmuramic acid kinase (369 aa).

9–16 (GTSLDAVD) contacts ATP.

This sequence belongs to the anhydro-N-acetylmuramic acid kinase family.

The enzyme catalyses 1,6-anhydro-N-acetyl-beta-muramate + ATP + H2O = N-acetyl-D-muramate 6-phosphate + ADP + H(+). Its pathway is amino-sugar metabolism; 1,6-anhydro-N-acetylmuramate degradation. It participates in cell wall biogenesis; peptidoglycan recycling. In terms of biological role, catalyzes the specific phosphorylation of 1,6-anhydro-N-acetylmuramic acid (anhMurNAc) with the simultaneous cleavage of the 1,6-anhydro ring, generating MurNAc-6-P. Is required for the utilization of anhMurNAc either imported from the medium or derived from its own cell wall murein, and thus plays a role in cell wall recycling. The chain is Anhydro-N-acetylmuramic acid kinase from Phenylobacterium zucineum (strain HLK1).